The sequence spans 281 residues: 3-methyl-2-oxobutanoate hydroxymethyltransferase (281 aa).

A disordered region spans residues 1 to 20 (MSEQTIYGANTPGGSGPRTK). Mg(2+) contacts are provided by Asp62 and Asp101. 3-methyl-2-oxobutanoate contacts are provided by residues 62–63 (DS), Asp101, and Lys131. Position 133 (Glu133) interacts with Mg(2+). The active-site Proton acceptor is Glu199.

This sequence belongs to the PanB family. As to quaternary structure, homodecamer; pentamer of dimers. Requires Mg(2+) as cofactor.

It localises to the cytoplasm. The enzyme catalyses 3-methyl-2-oxobutanoate + (6R)-5,10-methylene-5,6,7,8-tetrahydrofolate + H2O = 2-dehydropantoate + (6S)-5,6,7,8-tetrahydrofolate. It functions in the pathway cofactor biosynthesis; (R)-pantothenate biosynthesis; (R)-pantoate from 3-methyl-2-oxobutanoate: step 1/2. In terms of biological role, catalyzes the reversible reaction in which hydroxymethyl group from 5,10-methylenetetrahydrofolate is transferred onto alpha-ketoisovalerate to form ketopantoate. The chain is 3-methyl-2-oxobutanoate hydroxymethyltransferase from Mycobacterium bovis (strain ATCC BAA-935 / AF2122/97).